We begin with the raw amino-acid sequence, 179 residues long: NADH-quinone oxidoreductase subunit B 1 (179 aa).

Cys38, Cys39, Cys104, and Cys133 together coordinate [4Fe-4S] cluster.

Belongs to the complex I 20 kDa subunit family. In terms of assembly, NDH-1 is composed of 14 different subunits. Subunits NuoB, C, D, E, F, and G constitute the peripheral sector of the complex. The cofactor is [4Fe-4S] cluster.

The protein resides in the cell membrane. The enzyme catalyses a quinone + NADH + 5 H(+)(in) = a quinol + NAD(+) + 4 H(+)(out). Its function is as follows. NDH-1 shuttles electrons from NADH, via FMN and iron-sulfur (Fe-S) centers, to quinones in the respiratory chain. The immediate electron acceptor for the enzyme in this species is believed to be ubiquinone. Couples the redox reaction to proton translocation (for every two electrons transferred, four hydrogen ions are translocated across the cytoplasmic membrane), and thus conserves the redox energy in a proton gradient. This Herpetosiphon aurantiacus (strain ATCC 23779 / DSM 785 / 114-95) protein is NADH-quinone oxidoreductase subunit B 1.